The following is a 342-amino-acid chain: ATP-dependent (S)-NAD(P)H-hydrate dehydratase (342 aa).

The 327-residue stretch at Ile-11–Phe-337 folds into the YjeF C-terminal domain. (6S)-NADPHX contacts are provided by residues Gly-127 and Asn-180–Arg-186. ATP is bound by residues Lys-229 to Asp-233 and Gly-248 to Gly-257. Asp-258 serves as a coordination point for (6S)-NADPHX.

Belongs to the NnrD/CARKD family. The cofactor is Mg(2+).

It catalyses the reaction (6S)-NADHX + ATP = ADP + phosphate + NADH + H(+). The catalysed reaction is (6S)-NADPHX + ATP = ADP + phosphate + NADPH + H(+). In terms of biological role, catalyzes the dehydration of the S-form of NAD(P)HX at the expense of ATP, which is converted to ADP. Together with NAD(P)HX epimerase, which catalyzes the epimerization of the S- and R-forms, the enzyme allows the repair of both epimers of NAD(P)HX, a damaged form of NAD(P)H that is a result of enzymatic or heat-dependent hydration. This Physcomitrium patens (Spreading-leaved earth moss) protein is ATP-dependent (S)-NAD(P)H-hydrate dehydratase.